A 191-amino-acid chain; its full sequence is Ribonuclease M5 1 (191 aa).

The Toprim domain occupies 10-93 (KEVIVVEGKD…AFLTKHDAAP (84 aa)). E16, D62, and D64 together coordinate Mg(2+).

It belongs to the ribonuclease M5 family. The cofactor is Mg(2+).

It localises to the cytoplasm. It catalyses the reaction Endonucleolytic cleavage of RNA, removing 21 and 42 nucleotides, respectively, from the 5'- and 3'-termini of a 5S-rRNA precursor.. In terms of biological role, required for correct processing of both the 5' and 3' ends of 5S rRNA precursor. Cleaves both sides of a double-stranded region yielding mature 5S rRNA in one step. In Ligilactobacillus salivarius (strain CECT 5713) (Lactobacillus salivarius), this protein is Ribonuclease M5 1.